Reading from the N-terminus, the 454-residue chain is MAPQLLLCLILTFLWSLPEAESNVFLKSKEANRFLQRTKRSNSLFEEFRPGNIERECIEEKCSKEEAREIFKDNEKTEAFWNVYVDGDQCSSNPCHYGGTCKDGIGSYTCTCLPNYEGKNCEHLLFKSCRFFNGNCWHFCKPVQNDTQCSCAESYRLGDDGHSCVAEGDFSCGRNIKARNKREASLPDFVQSQNATLLKKSDNPSPDIRIINGMDCKLGECPWQAVLLDKEGDVFCGGTILSPIYVLTAAHCITQSKHISVVVGEIDISRKETRHLLSVDKAYVHTKFVLATYDYDIAIIQLKTPIQFSENVVPACLPTADFANQVLMKQDFGIISGFGHTRSGGQTSNTLKVVTIPYVDRHTCMLSSDFRITPNMFCAGYDTLPRDACQGDSGGPHITAYRDTHFITGIISWGEGCAKKGKYGVYTKVSNFIPWIKAVMRKHQPSTESSTGRL.

Residues 1 to 20 form the signal peptide; sequence MAPQLLLCLILTFLWSLPEA. A propeptide spanning residues 21-40 is cleaved from the precursor; it reads ESNVFLKSKEANRFLQRTKR. One can recognise a Gla domain in the interval 41 to 86; the sequence is SNSLFEEFRPGNIERECIEEKCSKEEAREIFKDNEKTEAFWNVYVD. Residues glutamate 46, glutamate 47, glutamate 54, glutamate 56, glutamate 59, glutamate 60, glutamate 65, glutamate 66, glutamate 69, and glutamate 75 each carry the 4-carboxyglutamate modification. A disulfide bridge links cysteine 57 with cysteine 62. Residues 86 to 122 form the EGF-like 1; calcium-binding domain; sequence DGDQCSSNPCHYGGTCKDGIGSYTCTCLPNYEGKNCE. Cystine bridges form between cysteine 90/cysteine 101, cysteine 95/cysteine 110, cysteine 112/cysteine 121, cysteine 129/cysteine 140, cysteine 136/cysteine 149, cysteine 151/cysteine 164, cysteine 172/cysteine 316, cysteine 216/cysteine 221, cysteine 236/cysteine 252, cysteine 364/cysteine 378, and cysteine 389/cysteine 417. A glycan (O-linked (Hex...) serine) is linked at serine 92. The region spanning 129–164 is the EGF-like 2 domain; that stretch reads CRFFNGNCWHFCKPVQNDTQCSCAESYRLGDDGHSC. A propeptide spans 182–209 (activation peptide); it reads REASLPDFVQSQNATLLKKSDNPSPDIR. Positions 210 to 441 constitute a Peptidase S1 domain; it reads IINGMDCKLG…FIPWIKAVMR (232 aa). Catalysis depends on charge relay system residues histidine 251 and aspartate 296. Serine 393 functions as the Charge relay system in the catalytic mechanism.

This sequence belongs to the peptidase S1 family. Snake venom subfamily. In terms of assembly, heterodimer of a light chain and a heavy chain; disulfide-linked. Post-translationally, the vitamin K-dependent, enzymatic carboxylation of some glutamate residues allows the modified protein to bind calcium. Expressed by the venom gland.

It localises to the secreted. It catalyses the reaction Selective cleavage of Arg-|-Thr and then Arg-|-Ile bonds in prothrombin to form thrombin.. Its function is as follows. Snake prothrombin activator that attacks the hemostatic system of prey. This protein is functionally similar to blood coagulation factor Xa. This chain is Venom prothrombin activator porpharin-D, found in Pseudechis porphyriacus (Red-bellied black snake).